A 350-amino-acid polypeptide reads, in one-letter code: GTPase Obg (350 aa).

Positions 1–159 constitute an Obg domain; it reads MKFLDQAKIY…RWIWLRLKLI (159 aa). The 169-residue stretch at 160 to 328 folds into the OBG-type G domain; the sequence is ADVGLVGLPN…VLRLLQDRVT (169 aa). GTP contacts are provided by residues 166–173, 191–195, 213–216, 280–283, and 309–311; these read GLPNAGKS, FTTLH, DIPG, NKID, and SGV. Serine 173 and threonine 193 together coordinate Mg(2+). The disordered stretch occupies residues 331–350; it reads REAARDAAPPQAAAGREETA.

The protein belongs to the TRAFAC class OBG-HflX-like GTPase superfamily. OBG GTPase family. As to quaternary structure, monomer. Mg(2+) is required as a cofactor.

It is found in the cytoplasm. Functionally, an essential GTPase which binds GTP, GDP and possibly (p)ppGpp with moderate affinity, with high nucleotide exchange rates and a fairly low GTP hydrolysis rate. Plays a role in control of the cell cycle, stress response, ribosome biogenesis and in those bacteria that undergo differentiation, in morphogenesis control. The protein is GTPase Obg of Gluconacetobacter diazotrophicus (strain ATCC 49037 / DSM 5601 / CCUG 37298 / CIP 103539 / LMG 7603 / PAl5).